The sequence spans 209 residues: Probable nicotinate-nucleotide adenylyltransferase (209 aa).

This sequence belongs to the NadD family.

It catalyses the reaction nicotinate beta-D-ribonucleotide + ATP + H(+) = deamido-NAD(+) + diphosphate. It functions in the pathway cofactor biosynthesis; NAD(+) biosynthesis; deamido-NAD(+) from nicotinate D-ribonucleotide: step 1/1. In terms of biological role, catalyzes the reversible adenylation of nicotinate mononucleotide (NaMN) to nicotinic acid adenine dinucleotide (NaAD). The protein is Probable nicotinate-nucleotide adenylyltransferase of Idiomarina loihiensis (strain ATCC BAA-735 / DSM 15497 / L2-TR).